A 382-amino-acid polypeptide reads, in one-letter code: Mannitol-1-phosphate 5-dehydrogenase (382 aa).

Position 3–14 (3–14) interacts with NAD(+); it reads ALHFGAGNIGRG. Lys-269 is modified (N6-acetyllysine).

This sequence belongs to the mannitol dehydrogenase family.

The catalysed reaction is D-mannitol 1-phosphate + NAD(+) = beta-D-fructose 6-phosphate + NADH + H(+). The chain is Mannitol-1-phosphate 5-dehydrogenase from Escherichia coli O45:K1 (strain S88 / ExPEC).